The following is a 347-amino-acid chain: D-alanine--D-alanine ligase (347 aa).

One can recognise an ATP-grasp domain in the interval 131-333 (KRVLESAGIA…YPDLIERLVE (203 aa)). An ATP-binding site is contributed by 161–216 (EEELTYPVFTKPSNMGSSVGISKSENQEELRQALKLAFQYDSRVLVEQGVNAREIE). Mg(2+)-binding residues include Asp-287, Glu-300, and Asn-302.

This sequence belongs to the D-alanine--D-alanine ligase family. Mg(2+) serves as cofactor. Mn(2+) is required as a cofactor.

Its subcellular location is the cytoplasm. The catalysed reaction is 2 D-alanine + ATP = D-alanyl-D-alanine + ADP + phosphate + H(+). It participates in cell wall biogenesis; peptidoglycan biosynthesis. Functionally, cell wall formation. The sequence is that of D-alanine--D-alanine ligase from Streptococcus pneumoniae (strain Hungary19A-6).